Reading from the N-terminus, the 276-residue chain is Formamidopyrimidine-DNA glycosylase (276 aa).

Pro-2 functions as the Schiff-base intermediate with DNA in the catalytic mechanism. Glu-3 acts as the Proton donor in catalysis. Catalysis depends on Lys-58, which acts as the Proton donor; for beta-elimination activity. His-94, Arg-112, and Arg-157 together coordinate DNA. Residues 242-276 (FVYDRAGQPCRVCGTPIKQIVQGQRSTYYCPTCQR) form an FPG-type zinc finger. Arg-266 functions as the Proton donor; for delta-elimination activity in the catalytic mechanism.

The protein belongs to the FPG family. In terms of assembly, monomer. It depends on Zn(2+) as a cofactor.

The catalysed reaction is Hydrolysis of DNA containing ring-opened 7-methylguanine residues, releasing 2,6-diamino-4-hydroxy-5-(N-methyl)formamidopyrimidine.. It catalyses the reaction 2'-deoxyribonucleotide-(2'-deoxyribose 5'-phosphate)-2'-deoxyribonucleotide-DNA = a 3'-end 2'-deoxyribonucleotide-(2,3-dehydro-2,3-deoxyribose 5'-phosphate)-DNA + a 5'-end 5'-phospho-2'-deoxyribonucleoside-DNA + H(+). In terms of biological role, involved in base excision repair of DNA damaged by oxidation or by mutagenic agents. Acts as a DNA glycosylase that recognizes and removes damaged bases. Has a preference for oxidized purines, such as 7,8-dihydro-8-oxoguanine (8-oxoG). Has AP (apurinic/apyrimidinic) lyase activity and introduces nicks in the DNA strand. Cleaves the DNA backbone by beta-delta elimination to generate a single-strand break at the site of the removed base with both 3'- and 5'-phosphates. The polypeptide is Formamidopyrimidine-DNA glycosylase (Paraburkholderia phymatum (strain DSM 17167 / CIP 108236 / LMG 21445 / STM815) (Burkholderia phymatum)).